The following is a 659-amino-acid chain: 3-hydroxypropionyl-coenzyme A synthetase (659 aa).

Aspartate 525 is an active-site residue. Residue lysine 616 is modified to N6-acetyllysine.

The protein belongs to the ATP-dependent AMP-binding enzyme family.

It catalyses the reaction 3-hydroxypropanoate + ATP + CoA = 3-hydroxypropanoyl-CoA + AMP + diphosphate. Plays a role in the autotrophic CO(2) fixation pathway. Activates 3-hydroxypropionate to its CoA ester. Can also activate propionate, and to a lesser extent acrylate, acetate and butyrate. In Sulfurisphaera tokodaii (strain DSM 16993 / JCM 10545 / NBRC 100140 / 7) (Sulfolobus tokodaii), this protein is 3-hydroxypropionyl-coenzyme A synthetase.